The chain runs to 203 residues: Outer-membrane lipoprotein LolB (203 aa).

A signal peptide spans 1 to 18 (MTLRSFLIFFLSSLILAG). C19 carries the N-palmitoyl cysteine lipid modification. A lipid anchor (S-diacylglycerol cysteine) is attached at C19.

It belongs to the LolB family. In terms of assembly, monomer.

The protein localises to the cell outer membrane. Functionally, plays a critical role in the incorporation of lipoproteins in the outer membrane after they are released by the LolA protein. In Vibrio parahaemolyticus serotype O3:K6 (strain RIMD 2210633), this protein is Outer-membrane lipoprotein LolB.